A 464-amino-acid chain; its full sequence is Centrosomal protein of 55 kDa (464 aa).

The span at 1 to 11 (MSSRSTKDLIK) shows a compositional bias: basic and acidic residues. The tract at residues 1-26 (MSSRSTKDLIKSKWGSKPSNSKSETT) is disordered. Coiled-coil stretches lie at residues 22–186 (KSET…QWLV), 238–337 (NDLL…FLYT), and 374–403 (QHQLHVILKELRKARNQITQLESLKQLHEF). At Ser96 the chain carries Phosphoserine. An interaction with TSG101 region spans residues 157–236 (PNCFNSSINN…GYLQEEKQKC (80 aa)). Positions 160–214 (FNSSINNIHEMEIQLKDALEKNQQWLVYDQQREVYVKGLLAKIFELEKKTETAAH) are interaction with PDCD6IP. The tract at residues 355–464 (QMQACTLDFE…LLVHVEYCSK (110 aa)) is required for localization to the interphase centrosome and to the midbody during cytokinesis. 2 positions are modified to phosphoserine; by CDK1 and MAPK1: Ser425 and Ser428. At Thr430 the chain carries Phosphothreonine. Ser436 is subject to Phosphoserine; by PLK1.

Homodimer. Interacts (phosphorylated on Ser-425 and Ser-428) with PLK1; the interaction is indirect via the MTMR3:MTMR4 heterooligomer, occurs during early mitosis, regulates the phosphorylation of CEP55 by PLK1 and its recruitment to the midbody where it can mediate cell abscission. Interacts with AKAP9/CG-NAP; the interaction occurs in interphase and is lost upon mitotic entry. Interacts with PCNT/Kendrin; the interaction occurs in interphase and is lost upon mitotic entry. Directly interacts with PDCD6IP; this interaction is required for PDCD6IP targeting to the midbody; CEP55 binds PDCD6IP in a 2:1 stoichiometry; PDCD6IP competes with TSG101 for the same binding site. Interacts with TSG101; TSG101 competes with PDCD6IP for the same binding site; interaction is required for cytokinesis but not for viral budding. Interacts with MVB12A, VPS37B, VPS37C and VPS28. In terms of processing, there is a hierachy of phosphorylation, where both Ser-425 and Ser-428 are phosphorylated at the onset of mitosis, prior to Ser-436. Phosphorylation at Ser-425 and Ser-428 is required for dissociation from the centrosome at the G2/M boundary. Phosphorylation at the 3 sites, Ser-425, Ser-428 and Ser-436, is required for protein function at the final stages of cell division to complete cytokinesis successfully. As to expression, expressed in embryonic brain. Expressed in fetal brain ganglionic eminence, kidney tubules and multinucleate neurons in the temporal cortex. Expressed in adult brain, cerebellum, kidney tubules, intestine and muscles (at protein level). Widely expressed, mostly in proliferative tissues. Highly expressed in testis. Intermediate levels in adult and fetal thymus, as well as in various cancer cell lines. Low levels in different parts of the digestive tract, bone marrow, lymph nodes, placenta, fetal heart and fetal spleen. Hardly detected in brain.

It localises to the cytoplasm. Its subcellular location is the cytoskeleton. The protein localises to the microtubule organizing center. The protein resides in the centrosome. It is found in the centriole. It localises to the cleavage furrow. Its subcellular location is the midbody. The protein localises to the midbody ring. Functionally, plays a role in mitotic exit and cytokinesis. Recruits PDCD6IP and TSG101 to midbody during cytokinesis. Required for successful completion of cytokinesis. Not required for microtubule nucleation. Plays a role in the development of the brain and kidney. This is Centrosomal protein of 55 kDa from Homo sapiens (Human).